Here is a 100-residue protein sequence, read N- to C-terminus: Urease subunit gamma (100 aa).

It belongs to the urease gamma subunit family. As to quaternary structure, heterotrimer of UreA (gamma), UreB (beta) and UreC (alpha) subunits. Three heterotrimers associate to form the active enzyme.

Its subcellular location is the cytoplasm. It catalyses the reaction urea + 2 H2O + H(+) = hydrogencarbonate + 2 NH4(+). The protein operates within nitrogen metabolism; urea degradation; CO(2) and NH(3) from urea (urease route): step 1/1. This is Urease subunit gamma from Synechocystis sp. (strain ATCC 27184 / PCC 6803 / Kazusa).